The chain runs to 301 residues: MSIDKSYCGFIAIVGRPNVGKSTLLNKLLGQKISITSRKAQTTRHRIVGIHTEGAYQAIYVDTPGLHMEEKRAINRLMNKAASSSIGDVELVIFVVEGTRWTPDDEMVLNKLREGKAPVILAVNKVDNVQEKADLLPHLQFLASQMNFLDIVPISAETGLNVATIAAIVRKHLPEATHHFPEDYITDRSQRFMASEIIREKLMRFLGAELPYSVTVEIERFVSNERGGYDINGLILVEREGQKKMVIGNKGAKIKTIGIEARKDMQEMFEAPVHLELWVKVKSGWADDERALRSLGYVDDL.

The region spanning 7-175 is the Era-type G domain; that stretch reads YCGFIAIVGR…AAIVRKHLPE (169 aa). A G1 region spans residues 15–22; the sequence is GRPNVGKS. A GTP-binding site is contributed by 15–22; sequence GRPNVGKS. Residues 41 to 45 are G2; sequence QTTRH. The G3 stretch occupies residues 62–65; that stretch reads DTPG. Residues 62–66 and 124–127 contribute to the GTP site; these read DTPGL and NKVD. Positions 124–127 are G4; that stretch reads NKVD. The segment at 154-156 is G5; that stretch reads ISA. One can recognise a KH type-2 domain in the interval 206 to 283; sequence LGAELPYSVT…HLELWVKVKS (78 aa).

This sequence belongs to the TRAFAC class TrmE-Era-EngA-EngB-Septin-like GTPase superfamily. Era GTPase family. As to quaternary structure, monomer.

The protein resides in the cytoplasm. It localises to the cell inner membrane. In terms of biological role, an essential GTPase that binds both GDP and GTP, with rapid nucleotide exchange. Plays a role in 16S rRNA processing and 30S ribosomal subunit biogenesis and possibly also in cell cycle regulation and energy metabolism. In Escherichia coli O157:H7, this protein is GTPase Era.